The following is a 336-amino-acid chain: Glycerol-3-phosphate dehydrogenase [NAD(P)+] (336 aa).

NADPH-binding residues include S16, Y17, H37, and K111. 3 residues coordinate sn-glycerol 3-phosphate: K111, G140, and T142. Residue A144 coordinates NADPH. The sn-glycerol 3-phosphate site is built by K196, D249, S259, R260, and N261. The Proton acceptor role is filled by K196. R260 is a binding site for NADPH. NADPH-binding residues include V284 and E286.

The protein belongs to the NAD-dependent glycerol-3-phosphate dehydrogenase family.

The protein localises to the cytoplasm. It carries out the reaction sn-glycerol 3-phosphate + NAD(+) = dihydroxyacetone phosphate + NADH + H(+). The catalysed reaction is sn-glycerol 3-phosphate + NADP(+) = dihydroxyacetone phosphate + NADPH + H(+). It participates in membrane lipid metabolism; glycerophospholipid metabolism. Its function is as follows. Catalyzes the reduction of the glycolytic intermediate dihydroxyacetone phosphate (DHAP) to sn-glycerol 3-phosphate (G3P), the key precursor for phospholipid synthesis. This Actinobacillus pleuropneumoniae serotype 5b (strain L20) protein is Glycerol-3-phosphate dehydrogenase [NAD(P)+].